A 793-amino-acid polypeptide reads, in one-letter code: Phenylalanine--tRNA ligase beta subunit (793 aa).

In terms of domain architecture, tRNA-binding spans 40–159 (SKLNTKLVIG…MDEMVGREIS (120 aa)). Positions 401–476 (NYDNVYSITL…RLYGYDNIIE (76 aa)) constitute a B5 domain. Positions 454, 460, 463, and 464 each coordinate Mg(2+). The FDX-ACB domain maps to 701–793 (SKFQKSTRDI…NLKELKVKVR (93 aa)).

It belongs to the phenylalanyl-tRNA synthetase beta subunit family. Type 1 subfamily. Tetramer of two alpha and two beta subunits. Requires Mg(2+) as cofactor.

It is found in the cytoplasm. The enzyme catalyses tRNA(Phe) + L-phenylalanine + ATP = L-phenylalanyl-tRNA(Phe) + AMP + diphosphate + H(+). The protein is Phenylalanine--tRNA ligase beta subunit of Mesoplasma florum (strain ATCC 33453 / NBRC 100688 / NCTC 11704 / L1) (Acholeplasma florum).